We begin with the raw amino-acid sequence, 776 residues long: Acetone carboxylase alpha subunit (776 aa).

In terms of assembly, heterohexamer of two alpha, two beta and two gamma subunits. Fe cation is required as a cofactor. The cofactor is Mg(2+). It depends on Zn(2+) as a cofactor. Post-translationally, the N-terminus is blocked.

It carries out the reaction acetone + hydrogencarbonate + 2 ATP + 3 H2O = acetoacetate + 2 AMP + 4 phosphate + 4 H(+). Catalyzes the carboxylation of acetone to form acetoacetate. Has a reduced activity on butanone, and no activity on 2-pentatone, 3-pentatone, 2-hexanone, chloroacetone, pyruvate, phosphoenolpyruvate, acetaldehyde, propionaldehyde and propylene oxide. This Xanthobacter autotrophicus (strain ATCC BAA-1158 / Py2) protein is Acetone carboxylase alpha subunit.